Consider the following 351-residue polypeptide: N-formyl peptide receptor 2 (351 aa).

Residues 1–27 (METNFSTPLNEYEEVSYESAGYTVLRI) lie on the Extracellular side of the membrane. The N-linked (GlcNAc...) asparagine glycan is linked to Asn-4. Residues 28-50 (LPLVVLGVTFVLGVLGNGLVIWV) traverse the membrane as a helical segment. Over 51-61 (AGFRMTRTVTT) the chain is Cytoplasmic. A helical membrane pass occupies residues 62 to 83 (ICYLNLALADFSFTATLPFLIV). The Extracellular portion of the chain corresponds to 84-100 (SMAMGEKWPFGWFLCKL). The cysteines at positions 98 and 176 are disulfide-linked. Residues 101–121 (IHIVVDINLFGSVFLIGFIAL) traverse the membrane as a helical segment. The Cytoplasmic portion of the chain corresponds to 122–140 (DRCICVLHPVWAQNHRTVS). The chain crosses the membrane as a helical span at residues 141 to 162 (LAMKVIVGPWILALVLTLPVFL). The Extracellular portion of the chain corresponds to 163 to 205 (FLTTVTIPNGDTYCTFNFASWGGTPEERLKVAITMLTARGIIR). Residues 206-226 (FVIGFSLPMSIVAICYGLIAA) traverse the membrane as a helical segment. Topologically, residues 227–242 (KIHKKGMIKSSRPLRV) are cytoplasmic. The helical transmembrane segment at 243–266 (LTAVVASFFICWFPFQLVALLGTV) threads the bilayer. Residues 267-286 (WLKEMLFYGKYKIIDILVNP) lie on the Extracellular side of the membrane. The chain crosses the membrane as a helical span at residues 287 to 306 (TSSLAFFNSCLNPMLYVFVG). Residues 307–351 (QDFRERLIHSLPTSLERALSEDSAPTNDTAANSASPPAETELQAM) lie on the Cytoplasmic side of the membrane. Positions 325-351 (LSEDSAPTNDTAANSASPPAETELQAM) are disordered. The span at 329–341 (SAPTNDTAANSAS) shows a compositional bias: polar residues.

It belongs to the G-protein coupled receptor 1 family. Interacts with Amyloid-beta protein 42, product of APP; the interaction takes place at the cell surface and the complex is then rapidly internalized. As to quaternary structure, (Microbial infection) Interacts with Staphylococcus aureus protein SSL13; this interaction leads to the activation of neutrophils. In terms of tissue distribution, detected in lung, bone marrow, neutrophils, spleen and testis.

It localises to the cell membrane. In terms of biological role, low affinity receptor for N-formyl-methionyl peptides, which are powerful neutrophil chemotactic factors. Binding of FMLP to the receptor causes activation of neutrophils. This response is mediated via a G-protein that activates a phosphatidylinositol-calcium second messenger system. The activation of LXA4R could result in an anti-inflammatory outcome counteracting the actions of pro-inflammatory signals such as LTB4 (leukotriene B4). Receptor for the chemokine-like protein FAM19A5, mediating FAM19A5-stimulated macrophage chemotaxis and the inhibitory effect on TNFSF11/RANKL-induced osteoclast differentiation. Acts as a receptor for humanin. This Homo sapiens (Human) protein is N-formyl peptide receptor 2 (FPR2).